The sequence spans 413 residues: Peptidase T (413 aa).

H82 serves as a coordination point for Zn(2+). D84 is a catalytic residue. A Zn(2+)-binding site is contributed by D145. E179 (proton acceptor) is an active-site residue. Residues E180, D202, and H384 each contribute to the Zn(2+) site.

This sequence belongs to the peptidase M20B family. Zn(2+) is required as a cofactor.

The protein localises to the cytoplasm. It catalyses the reaction Release of the N-terminal residue from a tripeptide.. Cleaves the N-terminal amino acid of tripeptides. This chain is Peptidase T, found in Latilactobacillus sakei subsp. sakei (strain 23K) (Lactobacillus sakei subsp. sakei).